A 337-amino-acid polypeptide reads, in one-letter code: Putative transcription activator protein HfaB (337 aa).

Over residues 303–313 (AYNNLGTNNAQ) the composition is skewed to polar residues. Residues 303 to 337 (AYNNLGTNNAQTRDDPSRWNARRDPDIRDAKRGRY) form a disordered region. Residues 314 to 337 (TRDDPSRWNARRDPDIRDAKRGRY) show a composition bias toward basic and acidic residues.

Required for the attachment of the holdfast to the cell. May be involved in the positive regulation of hfaC. The sequence is that of Putative transcription activator protein HfaB (hfaB) from Caulobacter vibrioides (strain ATCC 19089 / CIP 103742 / CB 15) (Caulobacter crescentus).